The chain runs to 131 residues: SPbeta prophage-derived uncharacterized protein YosD (131 aa).

The segment at 102-131 (EHNNKKAKNNDTQNQRQIKTSWWQRLTKKD) is disordered. Over residues 111 to 125 (NDTQNQRQIKTSWWQ) the composition is skewed to polar residues.

The chain is SPbeta prophage-derived uncharacterized protein YosD (yosD) from Bacillus subtilis (strain 168).